Consider the following 378-residue polypeptide: Dihydroorotate dehydrogenase (quinone) (378 aa).

FMN-binding positions include 77–81 (AGFDK) and threonine 101. A substrate-binding site is contributed by lysine 81. Position 126 to 130 (126 to 130 (NRMGF)) interacts with substrate. Residues asparagine 158 and asparagine 191 each coordinate FMN. Asparagine 191 serves as a coordination point for substrate. The active-site Nucleophile is serine 194. Asparagine 196 lines the substrate pocket. Positions 229 and 257 each coordinate FMN. 258–259 (NT) provides a ligand contact to substrate. FMN contacts are provided by residues glycine 287, glycine 316, and 337–338 (YT).

This sequence belongs to the dihydroorotate dehydrogenase family. Type 2 subfamily. Monomer. The cofactor is FMN.

It is found in the cell membrane. It carries out the reaction (S)-dihydroorotate + a quinone = orotate + a quinol. The protein operates within pyrimidine metabolism; UMP biosynthesis via de novo pathway; orotate from (S)-dihydroorotate (quinone route): step 1/1. Its function is as follows. Catalyzes the conversion of dihydroorotate to orotate with quinone as electron acceptor. In Synechococcus elongatus (strain ATCC 33912 / PCC 7942 / FACHB-805) (Anacystis nidulans R2), this protein is Dihydroorotate dehydrogenase (quinone).